Consider the following 393-residue polypeptide: Probable acetyl-CoA acyltransferase (393 aa).

The active-site Acyl-thioester intermediate is the cysteine 88. Active-site proton acceptor residues include histidine 349 and cysteine 378.

Belongs to the thiolase-like superfamily. Thiolase family.

It is found in the cytoplasm. The enzyme catalyses 2 acetyl-CoA = acetoacetyl-CoA + CoA. This is Probable acetyl-CoA acyltransferase from Staphylococcus aureus (strain MSSA476).